We begin with the raw amino-acid sequence, 435 residues long: Glutamine synthetase (435 aa).

One can recognise a GS beta-grasp domain in the interval lysine 12 to arginine 94. In terms of domain architecture, GS catalytic spans proline 100–isoleucine 435. 4 residues coordinate Mg(2+): glutamate 123, glutamate 125, glutamate 180, and glutamate 187. Glycine 232 provides a ligand contact to L-glutamate. Histidine 236 lines the Mg(2+) pocket. Serine 240 provides a ligand contact to ATP. L-glutamate is bound by residues arginine 291 and arginine 315. Residues arginine 315 and arginine 320 each coordinate ATP. Mg(2+) is bound at residue glutamate 328. Arginine 330 lines the L-glutamate pocket.

It belongs to the glutamine synthetase family. As to quaternary structure, homooctamer. It depends on Mg(2+) as a cofactor.

It catalyses the reaction L-glutamate + NH4(+) + ATP = L-glutamine + ADP + phosphate + H(+). Its function is as follows. Catalyzes the ATP-dependent biosynthesis of glutamine from glutamate and ammonia. The chain is Glutamine synthetase from Rhizobium leguminosarum bv. phaseoli.